The primary structure comprises 124 residues: Small ribosomal subunit protein uS12 (124 aa).

A 3-methylthioaspartic acid modification is found at D89.

Belongs to the universal ribosomal protein uS12 family. As to quaternary structure, part of the 30S ribosomal subunit. Contacts proteins S8 and S17. May interact with IF1 in the 30S initiation complex.

With S4 and S5 plays an important role in translational accuracy. Its function is as follows. Interacts with and stabilizes bases of the 16S rRNA that are involved in tRNA selection in the A site and with the mRNA backbone. Located at the interface of the 30S and 50S subunits, it traverses the body of the 30S subunit contacting proteins on the other side and probably holding the rRNA structure together. The combined cluster of proteins S8, S12 and S17 appears to hold together the shoulder and platform of the 30S subunit. The protein is Small ribosomal subunit protein uS12 of Buchnera aphidicola subsp. Acyrthosiphon pisum (strain 5A).